The following is a 155-amino-acid chain: Chaperone protein IpgC (155 aa).

It belongs to the LcrH/SycD chaperone family.

The protein resides in the cytoplasm. Its function is as follows. Assists the correct folding of nascent IpaB. Once it is bound to IpaB, it binds to IpaC and impedes their premature association that would lead to their degradation in the absence of IpcG. This chain is Chaperone protein IpgC (ipgC), found in Shigella dysenteriae.